The sequence spans 353 residues: DNA-directed RNA polymerase subunit alpha (353 aa).

The interval 1 to 245 is alpha N-terminal domain (alpha-NTD); it reads MEKIQKITYK…AHFQIIGNIN (245 aa). Residues 261-353 are alpha C-terminal domain (alpha-CTD); that stretch reads EREIKSTTPI…QLNNSEEGEE (93 aa).

This sequence belongs to the RNA polymerase alpha chain family. In terms of assembly, homodimer. The RNAP catalytic core consists of 2 alpha, 1 beta, 1 beta' and 1 omega subunit. When a sigma factor is associated with the core the holoenzyme is formed, which can initiate transcription.

The enzyme catalyses RNA(n) + a ribonucleoside 5'-triphosphate = RNA(n+1) + diphosphate. In terms of biological role, DNA-dependent RNA polymerase catalyzes the transcription of DNA into RNA using the four ribonucleoside triphosphates as substrates. The polypeptide is DNA-directed RNA polymerase subunit alpha (Mycoplasma sp).